The following is a 139-amino-acid chain: MKIYLYFIGKPKDPHANAIAEDFLARAGRYSPCEMREIRPERIDLWTKHPTARKIFLDPAGKPMDSAAFAAMISKGEMEGRDLVFLIGGHDGLPPAWRARADLLVSLSAMTFPHELARAMLAEQIYRGFCTLRNHPYIR.

S-adenosyl-L-methionine contacts are provided by residues L57, G88, and 107 to 112 (LSAMTF).

The protein belongs to the RNA methyltransferase RlmH family. As to quaternary structure, homodimer.

Its subcellular location is the cytoplasm. The enzyme catalyses pseudouridine(1915) in 23S rRNA + S-adenosyl-L-methionine = N(3)-methylpseudouridine(1915) in 23S rRNA + S-adenosyl-L-homocysteine + H(+). Specifically methylates the pseudouridine at position 1915 (m3Psi1915) in 23S rRNA. The polypeptide is Ribosomal RNA large subunit methyltransferase H (Solibacter usitatus (strain Ellin6076)).